Here is a 680-residue protein sequence, read N- to C-terminus: HEAT repeat-containing protein 3 (680 aa).

Over residues 1–11 the composition is skewed to basic residues; sequence MGKSRTKRFKR. The tract at residues 1–39 is disordered; it reads MGKSRTKRFKRPQFSPTGDCQAEAAAAANGTGGEEDDGP. Position 15 is a phosphoserine (Ser15). A compositionally biased stretch (low complexity) spans 18–29; sequence GDCQAEAAAAAN. 2 HEAT repeats span residues 38-69 and 74-110; these read GPAA…VQQR and GLAR…SACG. A Phosphoserine modification is found at Ser144. A Phosphothreonine modification is found at Thr340.

It belongs to the nuclear import and ribosome assembly adapter family. In terms of assembly, component of a hexameric 5S RNP precursor complex, composed of 5S RNA, RRS1, RPF2/BXDC1, RPL5, RPL11 and HEATR3; this complex acts as a precursor for ribosome assembly.

Functionally, plays a role in ribosome biogenesis and in nuclear import of the 60S ribosomal protein L5/large ribosomal subunit protein uL18 (RPL5). Required for proper erythrocyte maturation. The chain is HEAT repeat-containing protein 3 (HEATR3) from Homo sapiens (Human).